Reading from the N-terminus, the 520-residue chain is MAEIKNAKVEQRQTKIRNVPVAVTPEGFWCCPSPVAFQKTLKSHNSLTKHKQSSPALQPPKPEKKPSSTTIRSVIASDETQQNLGSFDTVHSIAVPATVQERPQRQKVETLPRKVAIEFGEPGSSDAKVILVGKQGFCVKLSVHKKVLVDHSCFFAKKLAEKDSVFACLEIESCEDAELYVETIGLMYCKDMKQRLMKQNVSRVLRVLKVAELLGFSSCIQSCLDYLEAVPWVGEEEEEKVISSILRLKTEGVGVTPVLKRVASNAVDPPKETLSRIIELVLRSKEEKSRREMKSIVLKLLREQNGANVADNFNDTIYSSCQTCLDSVLSLFKQASEGEKPETDTKQIAVEADNLTWLLDVLAERQAAEEFSVTWANQKELALLHEKLPLMSRYHISRVTSRLFIGIGRGELLPSKDTRLLLLTTWLQPLFNDYNWLQHGCRSFDGKLVEEGIGRTILTLPLEDQQSILLSWLGSFLNGGDGCPNLQRAFEVWWRRSFIRPYSDRQANGSCQTDSTSKEE.

The segment at 43–68 (SHNSLTKHKQSSPALQPPKPEKKPSS) is disordered. Positions 127–196 (AKVILVGKQG…MYCKDMKQRL (70 aa)) constitute a BTB domain.

Its pathway is protein modification; protein ubiquitination. May act as a substrate-specific adapter of an E3 ubiquitin-protein ligase complex (CUL3-RBX1-BTB) which mediates the ubiquitination and subsequent proteasomal degradation of target proteins. The polypeptide is BTB/POZ domain-containing protein At3g50780 (Arabidopsis thaliana (Mouse-ear cress)).